A 178-amino-acid polypeptide reads, in one-letter code: Putative metal-dependent hydrolase GK0616 (178 aa).

His68, His161, and His165 together coordinate Zn(2+).

It belongs to the metal hydrolase YfiT family. As to quaternary structure, homodimer. Zn(2+) is required as a cofactor.

It localises to the cytoplasm. In terms of biological role, possible metal-dependent hydrolase. The sequence is that of Putative metal-dependent hydrolase GK0616 from Geobacillus kaustophilus (strain HTA426).